Here is a 463-residue protein sequence, read N- to C-terminus: Female germline-specific tumor suppressor gld-1 (463 aa).

Residues 1 to 10 (MPSCTTPTYG) are compositionally biased toward polar residues. The tract at residues 1–76 (MPSCTTPTYG…RAPPPARLTL (76 aa)) is disordered. The segment covering 11-31 (VSTQLESQSSESPSRSSVMTP) has biased composition (low complexity). Residues 135-205 (PTATEPIEVE…PEPAGDMISI (71 aa)) are qua1 domain; involved in homodimerization. The 53-residue stretch at 208–260 (KIYVPKNEYPDYNFVGRILGPRGMTAKQLEQDTGCKIMVRGKGSMRDKSKESA) folds into the KH domain. A qua2 domain; involved in RNA binding region spans residues 305–336 (APEGTDELKRKQLMELAIINGTYRPMKSPNPA). The segment at 443–463 (NTNVSPSGASPSASSVNNTSF) is disordered. The span at 447 to 457 (SPSGASPSASS) shows a compositional bias: low complexity.

As to quaternary structure, homodimer. In terms of processing, phosphorylated by cdk-2 which may negatively regulate its expression in distal mitotic germline cells. Undergoes proteasomal degradation in proximal oocytes following mating. As to expression, expressed in proximal and distal oocytes in female worms but is eliminated from proximal oocytes following mating.

Functionally, RNA-binding protein which recognizes the 5'-UACUCAU-3' RNA consensus sequence. Binds sequences in both the 5'coding and the 3'-UTR region of rme-2 mRNA. Binds sequences in the 3'-UTR region of cye-1 mRNA. Binds to cyb-2.1, cyb-2.2 and cyb-3 mRNA. Binds sequences in the 3'-UTR region of tra-2 mRNA. Binds to the 3' UTR of Notch receptor homolog glp-1, thereby repressing glp-1 translation in the embryo. Binding to the glp-1 3' UTR is inhibited by pos-1 binding to an overlapping binding site in the glp-1 3' UTR. Germ line-specific tumor suppressor essential for oogenesis. Controls the spatial pattern of translation of multiple oogenesis specific mRNAs (e.g. yolk receptor rme-2) by repression of translation during early meiotic prophase (leptotene to pachytene) and then derepression of translation during diplotene/ diakinesis, following its degradation. Also functions to promote the male sexual fate in the hermaphrodite germline but not the male germline. Represses translation of the vacuolar ATPase component vha-13 in the distal gonad. Functions redundantly with gld-2 to promote the initiation of meiotic development and/or inhibit stem cell proliferation. By regulating cye-1 expression, prevents entry into mitosis in meiotic germline cells. This is Female germline-specific tumor suppressor gld-1 (gld-1) from Caenorhabditis elegans.